The primary structure comprises 259 residues: uncharacterized protein (259 aa).

This sequence belongs to the BtpA family.

This is an uncharacterized protein from Pyrococcus abyssi (strain GE5 / Orsay).